The following is a 360-amino-acid chain: Chorismate synthase (360 aa).

Positions 48 and 54 each coordinate NADP(+). Residues 125–127, 242–243, G283, 298–302, and R324 contribute to the FMN site; these read RSS, NG, and KPTSS.

Belongs to the chorismate synthase family. Homotetramer. FMNH2 is required as a cofactor.

It carries out the reaction 5-O-(1-carboxyvinyl)-3-phosphoshikimate = chorismate + phosphate. The protein operates within metabolic intermediate biosynthesis; chorismate biosynthesis; chorismate from D-erythrose 4-phosphate and phosphoenolpyruvate: step 7/7. In terms of biological role, catalyzes the anti-1,4-elimination of the C-3 phosphate and the C-6 proR hydrogen from 5-enolpyruvylshikimate-3-phosphate (EPSP) to yield chorismate, which is the branch point compound that serves as the starting substrate for the three terminal pathways of aromatic amino acid biosynthesis. This reaction introduces a second double bond into the aromatic ring system. The protein is Chorismate synthase of Gluconobacter oxydans (strain 621H) (Gluconobacter suboxydans).